The chain runs to 506 residues: Transcription factor CP2 (506 aa).

Residues 61–300 enclose the Grh/CP2 DB domain; that stretch reads ENKILPFQYV…SPGFNSSHNS (240 aa). Residues 133 to 395 form a DNA-binding region; that stretch reads EHQQLEGWRW…LFNALKGRIV (263 aa). 2 disordered regions span residues 238–268 and 291–316; these read FKPKGADRKQKTDREKMEKRTPQEKEKYQPS and SPGFNSSHNSFPIGEGNGSPNHQPEP. Over residues 241 to 265 the composition is skewed to basic and acidic residues; it reads KGADRKQKTDREKMEKRTPQEKEKY. Residues 291-300 show a composition bias toward polar residues; sequence SPGFNSSHNS.

This sequence belongs to the grh/CP2 family. CP2 subfamily. As to quaternary structure, component of the SSP (stage selector protein) complex, which appears to be a heteromer of TFCP2 and 2 copies of NFE4.

Its subcellular location is the nucleus. Functionally, may function as a transcription factor. The sequence is that of Transcription factor CP2 (tfcp2) from Xenopus laevis (African clawed frog).